The following is a 227-amino-acid chain: MAEEQQNSDQSNGGNVIPTPEEVATFLHKTVEEGGWEKCWEEEITPWDQGRATPLIVHLVDTSSLPLGRALVPGCGGGHDVVAMASPERFVVGLDISESALAKANETYGSSPKAEYFSFVKEDVFTWRPTELFDLIFDYVFFCAIEPEMRPAWAKSMYELLKPDGELITLMYPITDHVGGPPYKVDVSTFEEVLVPIGFKAVSVEENPHAIPTRKGKEKLGRWKKIN.

Positions 36, 40, 47, and 74 each coordinate S-adenosyl-L-methionine. A Phosphoserine modification is found at serine 86. S-adenosyl-L-methionine contacts are provided by residues aspartate 95, 123 to 124 (DV), and tyrosine 139.

The protein belongs to the class I-like SAM-binding methyltransferase superfamily. TPMT family. In terms of tissue distribution, expressed in shoots, leaves, stems, inflorescences, flowers and green siliques.

It catalyses the reaction thiocyanate + S-adenosyl-L-methionine = methyl thiocyanate + S-adenosyl-L-homocysteine. In terms of biological role, S-adenosyl-L-methionine-dependent methyltransferase. Involved in glucosinolate metabolism and defense against phytopathogens. Highly reactive to thiocyanate (NCS(-)) derived from myrosinase-mediated hydrolysis of glucosinolates upon tissue damage. The chain is Thiocyanate methyltransferase 1 from Arabidopsis thaliana (Mouse-ear cress).